Here is a 748-residue protein sequence, read N- to C-terminus: Catalase-peroxidase (748 aa).

Residues 92 to 238 (WHSAGTYRIG…LAAVQMGLIY (147 aa)) constitute a cross-link (tryptophyl-tyrosyl-methioninium (Trp-Tyr) (with M-264)). The active-site Proton acceptor is the His-93. Residues 238–264 (YVNPEGPDGNPDPIASARDIRDTFARM) constitute a cross-link (tryptophyl-tyrosyl-methioninium (Tyr-Met) (with W-92)). His-279 contacts heme b.

The protein belongs to the peroxidase family. Peroxidase/catalase subfamily. Homodimer or homotetramer. Requires heme b as cofactor. Formation of the three residue Trp-Tyr-Met cross-link is important for the catalase, but not the peroxidase activity of the enzyme.

The enzyme catalyses H2O2 + AH2 = A + 2 H2O. It carries out the reaction 2 H2O2 = O2 + 2 H2O. Functionally, bifunctional enzyme with both catalase and broad-spectrum peroxidase activity. In Xanthomonas euvesicatoria pv. vesicatoria (strain 85-10) (Xanthomonas campestris pv. vesicatoria), this protein is Catalase-peroxidase.